Reading from the N-terminus, the 289-residue chain is Trimeric intracellular cation channel type B (289 aa).

Residues 1-18 (MDVFAFFNLNELAFGLSK) lie on the Lumenal side of the membrane. The helical transmembrane segment at 19 to 36 (LPMFPYFDMAHYIISVMS) threads the bilayer. Residues 37 to 49 (LREQPGALCVSQR) are Cytoplasmic-facing. The chain crosses the membrane as a helical span at residues 50–73 (SPLACWFSSMLYCFGGAVLSALML). Residues 74–85 (ADAPVAPLSNTT) lie on the Lumenal side of the membrane. A helical membrane pass occupies residues 86–103 (NLLLATLMWYLVFYCPLD). Residues 104–107 (VVYS) are Cytoplasmic-facing. The helical transmembrane segment at 108 to 125 (LASLLPLRLVLTAMKEVT) threads the bilayer. Residues K122 and R126 each coordinate a 1,2-diacyl-sn-glycero-3-phospho-(1D-myo-inositol-4,5-bisphosphate). The Lumenal portion of the chain corresponds to 126-144 (RTWKVLSGVSQAGSKYSDA). A helical membrane pass occupies residues 145–162 (LFVMVAVGWAKGAGGGLI). Residues 163 to 183 (SNFEQLVRGVWKPETNELLKM) lie on the Cytoplasmic side of the membrane. The helical transmembrane segment at 184 to 201 (SYPTKVTLLGAVVFSLQQ) threads the bilayer. Topologically, residues 202–210 (CRYLPIQTH) are lumenal. Residues 211–230 (HLTFIYTLFTVTNKTRMMLL) traverse the membrane as a helical segment. The Cytoplasmic segment spans residues 231–289 (GSSSHPLSSLESFLYKTLFVRPLTDLSAEHTHSKHNGSVPEPTTAQTHTKEAEASKKTN). Residues 260–289 (HTHSKHNGSVPEPTTAQTHTKEAEASKKTN) form a disordered region. A compositionally biased stretch (basic and acidic residues) spans 278-289 (HTKEAEASKKTN).

The protein belongs to the TMEM38 family. In terms of assembly, homotrimer; conformation seems to be controled by binding to diacylglycerol (DAG).

Its subcellular location is the endoplasmic reticulum membrane. The enzyme catalyses K(+)(in) = K(+)(out). Its activity is regulated as follows. Channel activity is activated by increased cytosolic Ca(2+) levels and blocked by luminal high Ca(2+) levels. Its function is as follows. Intracellular monovalent cation channel required for maintenance of rapid intracellular calcium release. Acts as a potassium counter-ion channel that functions in synchronization with calcium release from intracellular stores. Activated by increased cytosolic Ca(2+) levels. This is Trimeric intracellular cation channel type B (tmem38b) from Danio rerio (Zebrafish).